Here is a 483-residue protein sequence, read N- to C-terminus: MFS-type transporter ppzB (483 aa).

5 helical membrane passes run 18 to 38 (FILT…GILL), 62 to 82 (AFLA…GWAA), 96 to 116 (MFLV…LLVV), 149 to 169 (IGTI…LGGV), and 178 to 198 (AVFA…ALVI). Asn219 carries N-linked (GlcNAc...) asparagine glycosylation. 6 consecutive transmembrane segments (helical) span residues 281 to 301 (LAML…ATVP), 310 to 330 (FSSL…FALG), 344 to 364 (AAAT…GLPE), 374 to 394 (VALF…VTSP), 424 to 444 (FGFS…LGGF), and 453 to 473 (VMGA…FLFV).

The protein belongs to the major facilitator superfamily. TCR/Tet family.

It is found in the membrane. MFS-type transporter; part of the gene cluster that mediates the biosynthesis of pyrrolopyrazines, secondary metabolites showing insecticidal activity. Probably involved in the secretion of peramine and other pyrrolopyrazines. The polypeptide is MFS-type transporter ppzB (Metarhizium rileyi (strain RCEF 4871) (Nomuraea rileyi)).